Here is a 151-residue protein sequence, read N- to C-terminus: U-scoloptoxin(17)-Er2a (151 aa).

The N-terminal stretch at 1-22 (MKSFFVVFAIVFQATLVALSLA) is a signal peptide.

Belongs to the scoloptoxin-17 family. Post-translationally, contains 5 disulfide bonds. As to expression, expressed by the venom gland.

The protein localises to the secreted. This Ethmostigmus rubripes (Giant centipede) protein is U-scoloptoxin(17)-Er2a.